The sequence spans 502 residues: MEIKAEEISEIIRKQIKEYGTEVAVAETGTIISIGDGIARIHGLDKAMAGELLEFPGGITGMVLNLEEDNVGAAILGEFSEIKEGDSVKLTGKIVEVPVGPALIGRVVDAIGNPIDGLGPINTDTFGKVEVKAPGIVKRKSVHQPMQTGLKAIDSMVPIGRGQRELIIGDRQTGKTAVAIDTIINQKGGDVVCIYVAIGQKRSTVAQVVSKLKEHGAMDYTIVVAATASEPAPLQFIAPYTGVTMGEFFRDSGKHALIIYDDLSKQAVAYRQLSLLLRRPPGREAYPGDVFYLHSRLLERACKVSDDCGAGSLTALPVIETQAGDVSAYIPTNVISITDGQIYLESDLFYSGVRPAINVGLSVSRVGGSAQVKAMKQVAGTLRLALAQYREMAAFAQFGSDLDKATQMQLARGARLVEILKQPQYRPIPNEKQVLIIFAANNGFVDDYPIGSLGRYETELYAFFDSRKATLLGELRDKKAIDDAMKGEIIASLEEFKKEFTA.

Residue 169–176 (GDRQTGKT) coordinates ATP.

The protein belongs to the ATPase alpha/beta chains family. As to quaternary structure, F-type ATPases have 2 components, CF(1) - the catalytic core - and CF(0) - the membrane proton channel. CF(1) has five subunits: alpha(3), beta(3), gamma(1), delta(1), epsilon(1). CF(0) has three main subunits: a(1), b(2) and c(9-12). The alpha and beta chains form an alternating ring which encloses part of the gamma chain. CF(1) is attached to CF(0) by a central stalk formed by the gamma and epsilon chains, while a peripheral stalk is formed by the delta and b chains.

The protein resides in the cell inner membrane. It carries out the reaction ATP + H2O + 4 H(+)(in) = ADP + phosphate + 5 H(+)(out). Produces ATP from ADP in the presence of a proton gradient across the membrane. The alpha chain is a regulatory subunit. The protein is ATP synthase subunit alpha of Citrifermentans bemidjiense (strain ATCC BAA-1014 / DSM 16622 / JCM 12645 / Bem) (Geobacter bemidjiensis).